A 405-amino-acid chain; its full sequence is Arginine biosynthesis bifunctional protein ArgJ (405 aa).

The substrate site is built by Thr152, Lys178, Thr189, Glu276, Asn400, and Thr405. The Nucleophile role is filled by Thr189.

Belongs to the ArgJ family. Heterotetramer of two alpha and two beta chains.

It localises to the cytoplasm. It catalyses the reaction N(2)-acetyl-L-ornithine + L-glutamate = N-acetyl-L-glutamate + L-ornithine. It carries out the reaction L-glutamate + acetyl-CoA = N-acetyl-L-glutamate + CoA + H(+). It participates in amino-acid biosynthesis; L-arginine biosynthesis; L-ornithine and N-acetyl-L-glutamate from L-glutamate and N(2)-acetyl-L-ornithine (cyclic): step 1/1. The protein operates within amino-acid biosynthesis; L-arginine biosynthesis; N(2)-acetyl-L-ornithine from L-glutamate: step 1/4. In terms of biological role, catalyzes two activities which are involved in the cyclic version of arginine biosynthesis: the synthesis of N-acetylglutamate from glutamate and acetyl-CoA as the acetyl donor, and of ornithine by transacetylation between N(2)-acetylornithine and glutamate. In Pseudomonas syringae pv. syringae (strain B728a), this protein is Arginine biosynthesis bifunctional protein ArgJ.